Reading from the N-terminus, the 261-residue chain is MSDILDKIIAVKREEIAAALESAPLEELKVQASARDSRDFVGALRDKHAAGHAAVIAEVKKASPSKGVLREHFVPADIARSYAQHGAACLSVLTDERFFQGSARYLEQARAACTLPVLRKDFIVDAYQLLEARAMGADAILLIAAALDTPLMIDLEAYAHSLGLAVLVEVHNRGELDEALKLKTPFVGINNRNLRTFETTIDTTLGMLDAIPDDRIVVTESGILSRADVERMEAAGVHTFLVGEAFMRAENPGAELARMFF.

This sequence belongs to the TrpC family.

It catalyses the reaction 1-(2-carboxyphenylamino)-1-deoxy-D-ribulose 5-phosphate + H(+) = (1S,2R)-1-C-(indol-3-yl)glycerol 3-phosphate + CO2 + H2O. It functions in the pathway amino-acid biosynthesis; L-tryptophan biosynthesis; L-tryptophan from chorismate: step 4/5. The chain is Indole-3-glycerol phosphate synthase from Burkholderia mallei (strain NCTC 10247).